A 299-amino-acid chain; its full sequence is MLKCHPGFNTKLELLKYGIQFVYFIVGLGFHFAVIKVLHKKWSVYSKYPFLKLYYVDSILSVLIILLDLVLIRVFNYIPPLCQWVLQEFPEPSQLISILFIEQYLQFVKSLIFCFMVVNRANNVICVKSFGTIQSCIIPHVIVFCILCPLLGVWTAFLSDSRFVPFQGGFIHETMMEYHWITVSQFSVIISSITIVTVCICSVISMLCISRTHAENKHTEQSLTASALAMSIFYVFALSMNIYCQKAHASSLEMLEFWKALTAFAFDIILVCPPVIMLCLNVRLRINVFSVDTRPTSPK.

7 helical membrane-spanning segments follow: residues Gly18–Leu38, Ile59–Pro79, Ile98–Val118, Ile137–Phe157, Ile189–Ile209, Leu223–Tyr243, and Ala260–Leu280.

It belongs to the nematode receptor-like protein srg family.

It localises to the membrane. This is Serpentine receptor class gamma-30 (srg-30) from Caenorhabditis elegans.